We begin with the raw amino-acid sequence, 119 residues long: Large ribosomal subunit protein bL20c (119 aa).

This sequence belongs to the bacterial ribosomal protein bL20 family.

Its subcellular location is the plastid. The protein resides in the chloroplast. Binds directly to 23S ribosomal RNA and is necessary for the in vitro assembly process of the 50S ribosomal subunit. It is not involved in the protein synthesizing functions of that subunit. The polypeptide is Large ribosomal subunit protein bL20c (Saccharum officinarum (Sugarcane)).